A 185-amino-acid chain; its full sequence is Large ribosomal subunit protein uL5 (185 aa).

It belongs to the universal ribosomal protein uL5 family. As to quaternary structure, part of the 50S ribosomal subunit; part of the 5S rRNA/L5/L18/L25 subcomplex. Contacts the 5S rRNA and the P site tRNA. Forms a bridge to the 30S subunit in the 70S ribosome.

Functionally, this is one of the proteins that bind and probably mediate the attachment of the 5S RNA into the large ribosomal subunit, where it forms part of the central protuberance. In the 70S ribosome it contacts protein S13 of the 30S subunit (bridge B1b), connecting the 2 subunits; this bridge is implicated in subunit movement. Contacts the P site tRNA; the 5S rRNA and some of its associated proteins might help stabilize positioning of ribosome-bound tRNAs. In Caulobacter sp. (strain K31), this protein is Large ribosomal subunit protein uL5.